Consider the following 138-residue polypeptide: Superoxide dismutase [Mn] (138 aa).

Residues Gln1, His49, Asp133, and His137 each coordinate Mn(2+).

The protein belongs to the iron/manganese superoxide dismutase family. It depends on Mn(2+) as a cofactor.

It carries out the reaction 2 superoxide + 2 H(+) = H2O2 + O2. Functionally, destroys superoxide anion radicals which are normally produced within the cells and which are toxic to biological systems. The polypeptide is Superoxide dismutase [Mn] (sodA) (Mycobacteroides chelonae (Mycobacterium chelonae)).